The following is a 519-amino-acid chain: Spermatocyte protein spe-8 (519 aa).

Disordered stretches follow at residues 1–39 (MSGV…NPNV) and 73–97 (NNLK…KQRD). Over residues 73–84 (NNLKKSASFDSK) the composition is skewed to polar residues. Over residues 85-97 (NQPEDSKTPKQRD) the composition is skewed to basic and acidic residues. Residues 119-208 (FYHGFMGRTE…PFYDNMTLIC (90 aa)) form the SH2 domain. Residues 146-154 (VGRRVAYVI) and Lys-184 each bind ATP. Residues 209-490 (GLARHEWQLN…KEEAGMHELD (282 aa)) form the Protein kinase domain. Residue Asp-349 is the Proton acceptor of the active site.

Belongs to the protein kinase superfamily. Tyr protein kinase family. Fes/fps subfamily. Expressed in hermaphrodite larvae but not in adult. Expressed in both male larvae and adult.

It localises to the cell membrane. It is found in the cytoplasm. The enzyme catalyses L-tyrosyl-[protein] + ATP = O-phospho-L-tyrosyl-[protein] + ADP + H(+). Functionally, probable non-receptor tyrosine-protein kinase which plays a role in spermatid activation (spermiogenesis) in hermaphrodites. This Caenorhabditis briggsae protein is Spermatocyte protein spe-8.